The sequence spans 1462 residues: Serine/threonine-protein kinase HSL1 (1462 aa).

2 disordered regions span residues 1 to 26 (MSTV…SSSM) and 41 to 69 (RLSQ…KLGR). Residues 65–330 (WKLGRTLGRG…IDAILTHPLL (266 aa)) enclose the Protein kinase domain. ATP-binding positions include 71–79 (LGRGSTGRV) and K94. D201 (proton acceptor) is an active-site residue. Disordered stretches follow at residues 412–450 (SNSF…HTTV), 471–540 (SAKG…TSVN), 598–637 (ENSK…TWSL), 992–1031 (EDEE…NYDF), 1095–1230 (KETL…QQTK), and 1269–1321 (NRAA…LQKE). Composition is skewed to polar residues over residues 428–440 (PRST…TVTD) and 471–487 (SAKG…PNTP). Residues 510–526 (ASRSRNASSRSLKSNSS) are compositionally biased toward low complexity. The span at 527–540 (TGRNGNNASVTSVN) shows a compositional bias: polar residues. A compositionally biased stretch (pro residues) spans 610–620 (QLPPPPPPPIE). The stretch at 636–715 (SLARRERELA…KLQKHQSAHD (80 aa)) forms a coiled coil. The segment covering 1095–1130 (KETLLKNHSSDEATIEVKEDNNEHDFNDKIKQHYDD) has biased composition (basic and acidic residues). Residues 1131–1153 (NGDSEEDDEDEDEEEEDDDDDDD) show a composition bias toward acidic residues. Polar residues-rich tracts occupy residues 1165-1176 (HNYSLAEITSES), 1197-1218 (STGI…NNGD), and 1292-1302 (NISQPLSSPTK).

Belongs to the protein kinase superfamily. CAMK Ser/Thr protein kinase family. NIM1 subfamily. Post-translationally, phosphorylated throughout the cell cycle, except for the G1 phase.

It is found in the bud neck. The enzyme catalyses L-seryl-[protein] + ATP = O-phospho-L-seryl-[protein] + ADP + H(+). It carries out the reaction L-threonyl-[protein] + ATP = O-phospho-L-threonyl-[protein] + ADP + H(+). Protein kinase involved in determination of morphology during the cell cycle of both yeast-form and hyphal cells via regulation of SWE1 and CDC28. Regulates pseudohypha formation, but is not required for septin ring organization or septum formation. Plays an essential role in virulence in a mouse model. This chain is Serine/threonine-protein kinase HSL1 (HSL1), found in Candida albicans (strain SC5314 / ATCC MYA-2876) (Yeast).